We begin with the raw amino-acid sequence, 568 residues long: Serine/threonine-protein kinase RIO1 (568 aa).

Disordered stretches follow at residues 14–70 and 83–109; these read GQFD…DDDW and YVWNGGSNPQANRQTSDSSSAKMSTPA. S21 and S22 each carry phosphoserine. Residues 24-38 show a composition bias toward basic and acidic residues; that stretch reads SENRDLKTVKEKDDI. The span at 51–70 shows a compositional bias: acidic residues; that stretch reads GEGEIEDEEEEGYDDDDDDW. Residues 87–105 show a composition bias toward polar residues; the sequence is GGSNPQANRQTSDSSSAKM. The region spanning 180 to 479 is the Protein kinase domain; that stretch reads TEINGCISTG…TGLKKDLSGV (300 aa). ATP is bound by residues K208, S278, and I280. The active-site Proton acceptor is D324. Positions 329 and 341 each coordinate Mg(2+). The active-site 4-aspartylphosphate intermediate is D341. A disordered region spans residues 490-568; that stretch reads VEERTCSDSE…EKTAKTKKGK (79 aa). Positions 497–513 are enriched in acidic residues; the sequence is DSEDIGSSECSDTDSEE. A compositionally biased stretch (basic and acidic residues) spans 514–543; sequence QGDHARPKKHTTDPDIDKKERKKMVKEAQR. Residues 544–568 show a composition bias toward basic residues; it reads EKRKNKIPKHVKKRKEKTAKTKKGK.

This sequence belongs to the protein kinase superfamily. RIO-type Ser/Thr kinase family. In terms of assembly, associates with the precursor of the 40S ribosome subunit. Interacts (via its N-terminus) with PRMT5 (via its N-terminus). Interacts with WDR77. Found in a PRMT5 complex composed of PRMT5, WDR77 and RIOK1. Interacts (via its C-terminus) with NCL; this interaction targets NCL for PRTM5 methylation. Mg(2+) serves as cofactor.

The protein resides in the cytoplasm. Its subcellular location is the cytosol. It catalyses the reaction L-seryl-[protein] + ATP = O-phospho-L-seryl-[protein] + ADP + H(+). It carries out the reaction L-threonyl-[protein] + ATP = O-phospho-L-threonyl-[protein] + ADP + H(+). The catalysed reaction is ATP + H2O = ADP + phosphate + H(+). In terms of biological role, involved in the final steps of cytoplasmic maturation of the 40S ribosomal subunit. Involved in processing of 18S-E pre-rRNA to the mature 18S rRNA. Required for the recycling of NOB1 and PNO1 from the late 40S precursor. The association with the very late 40S subunit intermediate may involve a translation-like checkpoint point cycle preceeding the binding to the 60S ribosomal subunit. Despite the protein kinase domain is proposed to act predominantly as an ATPase. The catalytic activity regulates its dynamic association with the 40S subunit. In addition to its role in ribosomal biogenesis acts as an adapter protein by recruiting NCL/nucleolin the to PRMT5 complex for its symmetrical methylation. The protein is Serine/threonine-protein kinase RIO1 of Homo sapiens (Human).